The primary structure comprises 196 residues: MSSNLHPVGGTGTGAAAPESVLNIVEEIAASGSVTAGLQAITSSPGMVNLLIGWAKTKFIQPIRESKLFQSRACQITLLVLGILLVVAGLACMFIFHSQLGANAFWLIIPAAIGLIKLLVTSLCFDEACTSEKLMVFQKWAGVLEDQLDDGILNNSNKIFGHVKTEGNTSRATTPVLNDGRGTPVLSPLVSKIARV.

A run of 3 helical transmembrane segments spans residues valine 34 to tryptophan 54, isoleucine 76 to phenylalanine 96, and phenylalanine 105 to phenylalanine 125.

It is found in the membrane. The protein is Sulfur-rich protein (srp) of Chlamydia pneumoniae (Chlamydophila pneumoniae).